We begin with the raw amino-acid sequence, 570 residues long: Probable metalloreductase AIM14 (570 aa).

Residues 1–20 lie on the Extracellular side of the membrane; that stretch reads MKESPLITLVKRHSETHFAN. A helical membrane pass occupies residues 21–41; that stretch reads IKYGYYVLIISLVYLIGLALL. At 42 to 69 the chain is on the cytoplasmic side; it reads RAFGRRTPSRSSSAFKNKIIYRLYDIDP. The chain crosses the membrane as a helical span at residues 70–90; the sequence is AIHLGILFFAVLIPFYYHYSL. Residues 91–141 lie on the Extracellular side of the membrane; it reads TTQSTVYLKRLGRLSYALIPLNLFLTLRPNWFLRKNCTYTDFIPFHKWFSR. Residues 101–219 form the Ferric oxidoreductase domain; that stretch reads LGRLSYALIP…NLVNVAFILL (119 aa). Residues 142-162 form a helical membrane-spanning segment; it reads IITVIGLLHGIFFIIKWAIDD. Over 163-176 the chain is Cytoplasmic; that stretch reads NVSLKQKLILKTFN. The chain crosses the membrane as a helical span at residues 177 to 197; sequence FAGFIISILVLFLLICSIGPM. Residues 198 to 373 are Extracellular-facing; that stretch reads RRYNYRLFYI…PEECYSQGTN (176 aa). Residues 250–388 form the FAD-binding FR-type domain; the sequence is FAKSLMILNK…GGSGISFALP (139 aa). Residues 374–394 traverse the membrane as a helical segment; the sequence is IAIICGGSGISFALPLFRHFF. The Cytoplasmic portion of the chain corresponds to 395–570; that stretch reads NKENVKYLKM…INFVCETYGL (176 aa). Positions 480–505 are enriched in polar residues; sequence ISNFNSENADSNDNTPETSHSPTKEN. Residues 480–509 are disordered; it reads ISNFNSENADSNDNTPETSHSPTKENGSMI.

Belongs to the ferric reductase (FRE) family. AIM14 subfamily. In terms of assembly, interacts with ribosomes.

It localises to the membrane. Probable cell surface metalloreductase. May be involved in iron or copper homeostasis. This is Probable metalloreductase AIM14 (AIM14) from Saccharomyces cerevisiae (strain ATCC 204508 / S288c) (Baker's yeast).